The primary structure comprises 881 residues: Plakophilin-2 (881 aa).

The segment at 1-348 (MAAPGAPAEY…FTDSQLGNAD (348 aa)) is required for interaction with influenza A virus RNA polymerase subunit PB1. The interval 1–360 (MAAPGAPAEY…MTLERAVSML (360 aa)) is required for binding to single-stranded DNA. At Ser44 the chain carries Phosphoserine. At Arg46 the chain carries Omega-N-methylarginine. Ser82 carries the phosphoserine; by MARK3 modification. 7 positions are modified to phosphoserine: Ser132, Ser135, Ser151, Ser154, Ser155, Ser169, and Ser172. Thr177 is modified (phosphothreonine). Residues Ser183, Ser197, Ser251, Ser294, and Ser329 each carry the phosphoserine modification. The disordered stretch occupies residues 282-314 (QNRASRSSWHQSSFHSTRTLREAGPSVAVDSSG). The span at 286-297 (SRSSWHQSSFHS) shows a compositional bias: low complexity. ARM repeat units follow at residues 341–383 (DSQL…ECFQ), 385–424 (SEARKRVNQLRGILKLLQLLKVQNEDVQRAVCGALRNLVF), 427–467 (NDNK…NLRS), 571–616 (DGRK…NLSY), 671–711 (PKGV…NLTA), 719–758 (SVAQTVVQKESGLQHTRKMLHVGDPSVKKTAISLLRNLSR), 763–804 (QNEI…NIIQ), and 807–849 (YQNA…SLWA).

This sequence belongs to the beta-catenin family. Interacts with DSC2. Interacts with JUP. Interacts with KRT5/CK5, KRT8/CK8, KRT14/CK14, KRT18/CK18 and VIM. Interacts (via N-terminus) with MARK3/C-TAK1. Interacts with DSP. Interacts with DSG1, DSG2 and DSG3. Interacts (via N-terminus) with CTNNB1. Interacts with CDH1. Interacts with the RNA polymerase III (Pol III) complex proteins POLR3A/RPC155, POLR3F/RPC39 and POLR3C/RPC82. Interacts with CTNNA3. Interacts (via N-terminus) with SCN5A/Nav1.5. Interacts with ANK3/ANKG and GJA1/CX43. In terms of assembly, (Microbial infection) Interacts (via N-terminus) with influenza A virus RNA polymerase subunit PB1 (via C-terminus); the interaction competitively inhibits the interaction between the subunits PB1 and PB2. Expressed at intercalated disks in the heart (at protein level). Expressed in gingival epithelial, endothelial and fibroblast cells (at protein level). Faintly expressed in tracheal epithelial cells (at protein level). Widely expressed. Found at desmosomal plaques in simple and stratified epithelia and in non-epithelial tissues such as myocardium and lymph node follicles. In most stratified epithelia found in the desmosomes of the basal cell layer and seems to be absent from suprabasal strata. In terms of tissue distribution, (Microbial infection) Abundantly expressed in tracheal epithelial cells following influenza A virus infection (at protein level).

Its subcellular location is the nucleus. It localises to the cell junction. The protein resides in the desmosome. The protein localises to the cytoplasm. A component of desmosome cell-cell junctions which are required for positive regulation of cellular adhesion. Regulates focal adhesion turnover resulting in changes in focal adhesion size, cell adhesion and cell spreading, potentially via transcriptional modulation of beta-integrins. Required to maintain gingival epithelial barrier function. Important component of the desmosome that is also required for localization of desmosome component proteins such as DSC2, DSG2 and JUP to the desmosome cell-cell junction. Required for the formation of desmosome cell junctions in cardiomyocytes, thereby required for the correct formation of the heart, specifically trabeculation and formation of the atria walls. Loss of desmosome cell junctions leads to mis-localization of DSP and DSG2 resulting in disruption of cell-cell adhesion and disordered intermediate filaments. Modulates profibrotic gene expression in cardiomyocytes via regulation of DSP expression and subsequent activation of downstream TGFB1 and MAPK14/p38 MAPK signaling. Required for cardiac sodium current propagation and electrical synchrony in cardiac myocytes, via ANK3 stabilization and modulation of SCN5A/Nav1.5 localization to cell-cell junctions. Required for mitochondrial function, nuclear envelope integrity and positive regulation of SIRT3 transcription via maintaining DES localization at its nuclear envelope and cell tip anchoring points, and thereby preserving regulation of the transcriptional program. Maintenance of nuclear envelope integrity protects against DNA damage and transcriptional dysregulation of genes, especially those involved in the electron transport chain, thereby preserving mitochondrial function and protecting against superoxide radical anion generation. Binds single-stranded DNA (ssDNA). May regulate the localization of GJA1 to gap junctions in intercalated disks of the heart. Involved in the inhibition of viral infection by influenza A viruses (IAV). Acts as a host restriction factor for IAV viral propagation, potentially via disrupting the interaction of IAV polymerase complex proteins. The polypeptide is Plakophilin-2 (Homo sapiens (Human)).